Here is a 378-residue protein sequence, read N- to C-terminus: UPF0754 membrane protein Bcer98_0694 (378 aa).

Residues 358-378 (LGALLGGTIGLMQGILLLFLM) form a helical membrane-spanning segment.

This sequence belongs to the UPF0754 family.

The protein localises to the cell membrane. This is UPF0754 membrane protein Bcer98_0694 from Bacillus cytotoxicus (strain DSM 22905 / CIP 110041 / 391-98 / NVH 391-98).